A 147-amino-acid chain; its full sequence is Large ribosomal subunit protein uL15 (147 aa).

Residues 1–62 (MDLNTLKPAL…GQMPLQRRLP (62 aa)) are disordered. The segment covering 30–39 (TATKGHKGQK) has biased composition (basic residues).

It belongs to the universal ribosomal protein uL15 family. Part of the 50S ribosomal subunit.

Functionally, binds to the 23S rRNA. In Pelobacter propionicus (strain DSM 2379 / NBRC 103807 / OttBd1), this protein is Large ribosomal subunit protein uL15.